The primary structure comprises 479 residues: MEKRLRLAPSPTGLFHIGTARTALFNWLYAQKIGGKFLLRIEDTDFVRSKSEYTKNILEGLKWLGLKWDDEILKQSDRISIHKSYIKKLLECGAAYRCFTTENEISELREEQKNKGLPPKHDNRHRSLSKEEIDSFISQGKTSVIRFKIDEKIEIKWVDLIRGEIKWQGKDLGGDLVLSRRAKGYEIGDPLYNLAVVVDDNFMNITHVVRGEDHISNTAKQILIYEALNFKLPTFSHTPLILNNEGKKLSKRDCVTSIDEFRDMGYLPEALSNYMAFLGWSPKSTDREILSLNEISEIFDLSDINKAGAKFSWEKLNWINSQYIKNMESIKLSEIIRKYWDDNGWVAPSQEWAHKLAILIRDSMILLKDAIDQSKPFFLIPKIKKEGQDFLENNDSKASLRLILNYLIEQNAIKLNKEKAKEIINEISKMHNVKKGILMKSLRVAFFGSLSGPDLIQSWELFSESKTDISRIERCFKSI.

The 'HIGH' region motif lies at 9–19 (PSPTGLFHIGT). The 'KMSKS' region signature appears at 248 to 252 (KLSKR). Lys251 is a binding site for ATP.

The protein belongs to the class-I aminoacyl-tRNA synthetase family. Glutamate--tRNA ligase type 1 subfamily. In terms of assembly, monomer.

It is found in the cytoplasm. It carries out the reaction tRNA(Glu) + L-glutamate + ATP = L-glutamyl-tRNA(Glu) + AMP + diphosphate. Catalyzes the attachment of glutamate to tRNA(Glu) in a two-step reaction: glutamate is first activated by ATP to form Glu-AMP and then transferred to the acceptor end of tRNA(Glu). The protein is Glutamate--tRNA ligase of Prochlorococcus marinus (strain MIT 9215).